The following is a 541-amino-acid chain: Chaperonin GroEL 2 (541 aa).

ATP contacts are provided by residues 29–32 (TLGP), 86–90 (DGTTT), G413, 476–478 (NAA), and D492.

The protein belongs to the chaperonin (HSP60) family. Forms a cylinder of 14 subunits composed of two heptameric rings stacked back-to-back. Interacts with the co-chaperonin GroES.

Its subcellular location is the secreted. It localises to the capsule. The protein localises to the cell surface. It is found in the cell wall. The enzyme catalyses ATP + H2O + a folded polypeptide = ADP + phosphate + an unfolded polypeptide.. In terms of biological role, together with its co-chaperonin GroES, plays an essential role in assisting protein folding. The GroEL-GroES system forms a nano-cage that allows encapsulation of the non-native substrate proteins and provides a physical environment optimized to promote and accelerate protein folding. This Mycolicibacterium vanbaalenii (strain DSM 7251 / JCM 13017 / BCRC 16820 / KCTC 9966 / NRRL B-24157 / PYR-1) (Mycobacterium vanbaalenii) protein is Chaperonin GroEL 2.